A 519-amino-acid chain; its full sequence is Ribonuclease Y 1 (519 aa).

A helical membrane pass occupies residues V3 to L23. Residues Q92–A120 are compositionally biased toward basic and acidic residues. Positions Q92–N124 are disordered. Residues T209–L272 enclose the KH domain. The HD domain occupies A335–T428.

It belongs to the RNase Y family.

The protein resides in the cell membrane. Endoribonuclease that initiates mRNA decay. In Levilactobacillus brevis (strain ATCC 367 / BCRC 12310 / CIP 105137 / JCM 1170 / LMG 11437 / NCIMB 947 / NCTC 947) (Lactobacillus brevis), this protein is Ribonuclease Y 1.